Here is a 292-residue protein sequence, read N- to C-terminus: Proteasome subunit beta 2 (292 aa).

A propeptide spans 1 to 59 (removed in mature form; by autocatalysis); that stretch reads MTVDRAPRITDGDTRLSFGSNLSSFSEYLRVHAPEHLPQNRFADTGGVVMGGGDVAPHG. Thr-60 acts as the Nucleophile in catalysis.

This sequence belongs to the peptidase T1B family. In terms of assembly, the 20S proteasome core is composed of 14 alpha and 14 beta subunits that assemble into four stacked heptameric rings, resulting in a barrel-shaped structure. The two inner rings, each composed of seven catalytic beta subunits, are sandwiched by two outer rings, each composed of seven alpha subunits. All four combinations of alpha- and beta-subunits (beta2-alpha1, beta2-alpha2, beta1-alpha2 and beta1-alpha1) yield fully assembled and proteolytically active proteasomes. The catalytic chamber with the active sites is on the inside of the barrel. Has probably a gated structure, the ends of the cylinder being occluded by the N-termini of the alpha-subunits. Is likely capped by the proteasome-associated ATPase, ARC.

The protein resides in the cytoplasm. It catalyses the reaction Cleavage of peptide bonds with very broad specificity.. Its pathway is protein degradation; proteasomal Pup-dependent pathway. With respect to regulation, the formation of the proteasomal ATPase ARC-20S proteasome complex, likely via the docking of the C-termini of ARC into the intersubunit pockets in the alpha-rings, may trigger opening of the gate for substrate entry. Interconversion between the open-gate and close-gate conformations leads to a dynamic regulation of the 20S proteasome proteolysis activity. Its function is as follows. Component of the proteasome core, a large protease complex with broad specificity involved in protein degradation. The R.erythropolis proteasomes are able to cleave oligopeptides after Tyr, Phe and Leu, very poorly after Arg but not after Glu. Thus, displays chymotrypsin-like activity, low trypsin-like activity but no caspase-like activity. This Rhodococcus erythropolis (Arthrobacter picolinophilus) protein is Proteasome subunit beta 2.